The primary structure comprises 447 residues: Glycerol-3-phosphate acyltransferase ATS11, chloroplastic (447 aa).

Positions 1-21 are disordered; it reads MFILSSSSSLPSPLSLSSSRV. The transit peptide at 1 to 48 directs the protein to the chloroplast; that stretch reads MFILSSSSSLPSPLSLSSSRVSLPPPSSSSLNLLPLSPHFQPPNLACS. An HXXXXD motif motif is present at residues 217–222; it reads HQTEAD.

Belongs to the GPAT/DAPAT family.

Its subcellular location is the plastid. The protein localises to the chloroplast stroma. It catalyses the reaction a fatty acyl-[ACP] + sn-glycerol 3-phosphate = a 1-acyl-sn-glycero-3-phosphate + holo-[ACP]. The catalysed reaction is sn-glycerol 3-phosphate + an acyl-CoA = a 1-acyl-sn-glycero-3-phosphate + CoA. It functions in the pathway phospholipid metabolism; CDP-diacylglycerol biosynthesis; CDP-diacylglycerol from sn-glycerol 3-phosphate: step 1/3. Its function is as follows. Esterifies the acyl-group from acyl-acyl carrier proteins (acyl-ACPs) to the sn-1 position of glycerol-3-phosphate. The physiological acyl donors in chloroplasts are acyl-ACPs, but acyl-CoAs are used as artificial donor for in vitro reactions. The enzyme from chilling-resistant plants discriminates against non-fluid palmitic acid and selects oleic acid whereas the enzyme from sensitive plants accepts both fatty acids. Squash is chilling-sensitive. Preferably utilizes oleoyl groups (18:1-ACP) and has lower affinity to palmitoyl (16:0-ACP) and stearoyl groups (18:0-ACP). The protein is Glycerol-3-phosphate acyltransferase ATS11, chloroplastic of Cucurbita moschata (Winter crookneck squash).